A 427-amino-acid chain; its full sequence is Glutamate-1-semialdehyde 2,1-aminomutase (427 aa).

K267 carries the N6-(pyridoxal phosphate)lysine modification.

The protein belongs to the class-III pyridoxal-phosphate-dependent aminotransferase family. HemL subfamily. In terms of assembly, homodimer. Pyridoxal 5'-phosphate serves as cofactor.

It localises to the cytoplasm. It catalyses the reaction (S)-4-amino-5-oxopentanoate = 5-aminolevulinate. The protein operates within porphyrin-containing compound metabolism; protoporphyrin-IX biosynthesis; 5-aminolevulinate from L-glutamyl-tRNA(Glu): step 2/2. In Desulfosudis oleivorans (strain DSM 6200 / JCM 39069 / Hxd3) (Desulfococcus oleovorans), this protein is Glutamate-1-semialdehyde 2,1-aminomutase.